The sequence spans 670 residues: Solute carrier organic anion transporter family member 1A1 (670 aa).

The Cytoplasmic segment spans residues 1–20 (MEETEKKIATQEGRLFSKMK). The chain crosses the membrane as a helical span at residues 21 to 40 (VFLLSLTCACLTKSLSGVYM). Residues 41–59 (NSMLTQIERQFDISTSVAG) are Extracellular-facing. Residues 60–80 (LINGSFEIGNLFFIVFVSYFG) form a helical membrane-spanning segment. Topologically, residues 81 to 86 (TKLHRP) are cytoplasmic. Residues 87-111 (VVIGIGCVIMGLGCLLMSLPHFFMG) form a helical membrane-spanning segment. The Extracellular portion of the chain corresponds to 112–155 (RYEYETTISPTGNLSSNSFLCMENRTQTLKPTQDPAECVKEMKS). Residues N124 and N135 are each glycosylated (N-linked (GlcNAc...) asparagine). Residues 156 to 184 (LMWICVMVGNIIRGIGETPIVPLGISYIE) traverse the membrane as a helical segment. The Cytoplasmic portion of the chain corresponds to 185 to 203 (DFAKSENSPLYIGILEMGK). Residues 204-224 (VAGPIFGLLLGSYCAQIYVDI) form a helical membrane-spanning segment. At 225–242 (GSVNTDDLTITPSDTRWV) the chain is on the extracellular side. Residues 243–267 (GAWWIGFLVCAGVNILTSIPFFFLP) form a helical membrane-spanning segment. Residues 268 to 311 (KALPKKGQQENVAVTKDGKVEKYGGQAREENLGITKDFLTFMKR) lie on the Cytoplasmic side of the membrane. The chain crosses the membrane as a helical span at residues 312-333 (LFCNPIYMLFILTSVLQVNGFI). The Extracellular portion of the chain corresponds to 334-353 (NKFTFLPKYLEQQYGKSTAE). A helical transmembrane segment spans residues 354-377 (AIFLIGVYSLPPICLGYLIGGFIM). Over 378-381 (KKFK) the chain is Cytoplasmic. Residues 382–405 (ITVKKAAYLAFCLSVFEYLLFLCH) form a helical membrane-spanning segment. Residues 406-513 (FMLTCDNAAV…PECANRLQYF (108 aa)) are Extracellular-facing. The Kazal-like domain occupies 433-488 (SKVLADCNTRCSCSTNTWDPVCGDNGVAYMSACLAGCKKFVGTGTNMVFQDCSCIQ). 3 disulfide bridges follow: C439–C469, C445–C465, and C454–C486. N492 carries an N-linked (GlcNAc...) asparagine glycan. The helical transmembrane segment at 514–536 (LILTIIISFIYSLTAIPGYMVFL) threads the bilayer. Topologically, residues 537–545 (RCVKSEEKS) are cytoplasmic. The helical transmembrane segment at 546–571 (LGVGLHTFCIRVFAGIPAPVYFGALI) threads the bilayer. The Extracellular segment spans residues 572–605 (DRTCLHWGTLKCGQRGACRMYDINSFRHIYLGLP). The helical transmembrane segment at 606–623 (IALRGSSYLPAFFILILM) threads the bilayer. At 624 to 670 (RKFQFPGDIDSSATDHTEMMLGEKESEHTDVHGSPQVENDGELKTKL) the chain is on the cytoplasmic side. 2 positions are modified to phosphoserine: S634 and S635. Over residues 645–654 (GEKESEHTDV) the composition is skewed to basic and acidic residues. The disordered stretch occupies residues 645–670 (GEKESEHTDVHGSPQVENDGELKTKL).

It belongs to the organo anion transporter (TC 2.A.60) family. As to quaternary structure, binds to PDZK1. Interaction with PDZK1 is required for expression on hepatocyte surface. Post-translationally, glycosylated. In terms of tissue distribution, highly expressed in liver and kidney, and at lower levels in brain, lung, skeletal muscle and proximal colon.

The protein resides in the basolateral cell membrane. The catalysed reaction is estrone 3-sulfate(out) + hydrogencarbonate(in) = estrone 3-sulfate(in) + hydrogencarbonate(out). It carries out the reaction taurocholate(out) + hydrogencarbonate(in) = taurocholate(in) + hydrogencarbonate(out). It catalyses the reaction L-thyroxine(out) = L-thyroxine(in). The enzyme catalyses prostaglandin E2(out) = prostaglandin E2(in). The catalysed reaction is 17beta-estradiol 17-O-(beta-D-glucuronate)(out) = 17beta-estradiol 17-O-(beta-D-glucuronate)(in). It carries out the reaction dehydroepiandrosterone 3-sulfate(out) = dehydroepiandrosterone 3-sulfate(in). Functionally, mediates the Na(+)-independent transport of organic anions such as steroid sulfate conjugates (dehydroepiandrosterone sulfate (DHEAS), 17-beta-glucuronosyl estradiol, estrone-3-sulfate), conjugated (taurocholate) and unconjugated (cholate) bile acids, prostaglandin E2 (PGE2) and L-thyroxine T4. Also capable of transporting sulfobromophthalein (BSP), ouabain and gadoxetate. Hydrogencarbonate/HCO3(-) acts as the probable counteranion that exchanges for organic anions. Shows a pH-sensitive substrate specificity which may be ascribed to the protonation state of the binding site and leads to a stimulation of substrate transport in an acidic microenvironment. In Rattus norvegicus (Rat), this protein is Solute carrier organic anion transporter family member 1A1.